Reading from the N-terminus, the 196-residue chain is Interleukin-18 (196 aa).

Residues methionine 1 to phenylalanine 29 constitute a propeptide that is removed on maturation.

This sequence belongs to the IL-1 family. Forms a ternary complex with ligand-binding receptor subunit IL18R1 and signaling receptor subunit IL18RAP at the plasma membrane. Mature IL18 first binds to IL18R1 forming a low affinity binary complex, which then interacts with IL18RAP to form a high affinity ternary complex that signals inside the cell. Interacts with cargo receptor TMED10; the interaction mediates the translocation from the cytoplasm into the ERGIC (endoplasmic reticulum-Golgi intermediate compartment) and thereby secretion. The pro-IL-18 precursor is processed by CASP1 or CASP4 to yield the active form.

The protein localises to the cytoplasm. It localises to the secreted. Augments natural killer cell activity in spleen cells and stimulates interferon gamma production in T-helper type I cells. Involved in transduction of inflammation downstream of pyroptosis: its mature form is specifically released in the extracellular milieu by passing through the gasdermin-D (GSDMD) pore. This Gallus gallus (Chicken) protein is Interleukin-18 (IL18).